Reading from the N-terminus, the 241-residue chain is Small ribosomal subunit protein uS2 (241 aa).

This sequence belongs to the universal ribosomal protein uS2 family.

The sequence is that of Small ribosomal subunit protein uS2 from Hamiltonella defensa subsp. Acyrthosiphon pisum (strain 5AT).